The chain runs to 117 residues: Large ribosomal subunit protein bL19 (117 aa).

It belongs to the bacterial ribosomal protein bL19 family.

Its function is as follows. This protein is located at the 30S-50S ribosomal subunit interface and may play a role in the structure and function of the aminoacyl-tRNA binding site. The sequence is that of Large ribosomal subunit protein bL19 from Vesicomyosocius okutanii subsp. Calyptogena okutanii (strain HA).